Reading from the N-terminus, the 1025-residue chain is Multidrug resistance protein MdtC (1025 aa).

A run of 12 helical transmembrane segments spans residues 3-23 (FFALFIYRPVATILLSVAITL), 333-353 (EVEQTLIISVALVILVVFLFL), 360-380 (IIPAVSVPVSLIGTFAAMYLC), 387-407 (LSLMALTIATGFVVDDAIVVL), 431-451 (VGFTVLSMSLSLVAVFLPLLL), 469-489 (VAIGISLLVSLTLTPMMCGWM), 528-548 (LVGVVLLGTIALNIWLYISIP), 853-873 (VILIIAAIATVYIVLGILYES), 875-895 (VHPLTILSTLPSAGVGALLAL), 897-917 (LFNAPFSLIALIGIMLLIGIV), 953-973 (PIMMTTLAALFGALPLVLSGG), and 984-1004 (ITIVGGLVMSQLLTLYTTPVV).

This sequence belongs to the resistance-nodulation-cell division (RND) (TC 2.A.6) family. MdtC subfamily. As to quaternary structure, part of a tripartite efflux system composed of MdtA, MdtB and MdtC. MdtC forms a heteromultimer with MdtB.

It is found in the cell inner membrane. The MdtABC tripartite complex confers resistance against novobiocin and deoxycholate. This Escherichia coli O9:H4 (strain HS) protein is Multidrug resistance protein MdtC.